Here is a 673-residue protein sequence, read N- to C-terminus: Methionine--tRNA ligase (673 aa).

Positions 13-23 match the 'HIGH' region motif; it reads PYTNGFCHLGH. Zn(2+)-binding residues include cysteine 144, cysteine 147, cysteine 156, and cysteine 160. The 'KMSKS' region motif lies at 325–329; the sequence is KFSKS. ATP is bound at residue lysine 328. Residues 575 to 673 enclose the tRNA-binding domain; it reads DVAKLDLRVG…KDVPEGTKVH (99 aa).

The protein belongs to the class-I aminoacyl-tRNA synthetase family. MetG type 1 subfamily. Homodimer. It depends on Zn(2+) as a cofactor.

The protein resides in the cytoplasm. The catalysed reaction is tRNA(Met) + L-methionine + ATP = L-methionyl-tRNA(Met) + AMP + diphosphate. Functionally, is required not only for elongation of protein synthesis but also for the initiation of all mRNA translation through initiator tRNA(fMet) aminoacylation. The sequence is that of Methionine--tRNA ligase from Methanocorpusculum labreanum (strain ATCC 43576 / DSM 4855 / Z).